A 380-amino-acid polypeptide reads, in one-letter code: GATOR1 complex protein NPRL2 (380 aa).

Residues 1–133 form an interaction with PDPK1 region; that stretch reads MGSGCRIECI…SKQKLVPIMT (133 aa). Position 78 (Arg-78) interacts with GDP. An Asymmetric dimethylarginine modification is found at Arg-78. Residues Lys-158 and Lys-357 each participate in a glycyl lysine isopeptide (Lys-Gly) (interchain with G-Cter in ubiquitin) cross-link.

It belongs to the NPR2 family. Within the GATOR complex, component of the GATOR1 subcomplex, made of DEPDC5, NPRL2 and NPRL3. GATOR1 mediates the strong interaction of the GATOR complex with small GTPases Rag (RagA/RRAGA, RagB/RRAGB, RagC/RRAGC and/or RagD/RRAGD) heterodimers. GATOR1 interacts with GPR155/LYCHOS; interaction takes place in presence of cholesterol and prevents interaction between GATOR1 and KICSTOR. Interacts with PDPK1. In terms of processing, in the presence of abundant amino acids, ubiquitinated at Lys-158 and Lys-357 via 'Lys-6'-linked ubiquitination by the WDR24 component of the GATOR2 complex, thereby inhibiting the GATOR1 complex and promoting mTORC1 activation. Post-translationally, asymmetric dimethylation at Arg-78 by PRMT1 inhibits the GTPase activator activity of the GATOR1 complex and consequently inducing timely mTORC1 activation under methionine-sufficient conditions. Most abundant in skeletal muscle, followed by brain, liver and pancreas, with lower amounts in lung, kidney, placenta and heart. Expressed in the frontal lobe cortex as well as in the temporal, parietal, and occipital lobes. Expressed in most lung cancer cell lines tested.

It is found in the lysosome membrane. Catalytic component of the GATOR1 complex, a multiprotein complex that functions as an inhibitor of the amino acid-sensing branch of the mTORC1 pathway. In response to amino acid depletion, the GATOR1 complex has GTPase activating protein (GAP) activity and strongly increases GTP hydrolysis by RagA/RRAGA (or RagB/RRAGB) within heterodimeric Rag complexes, thereby turning them into their inactive GDP-bound form, releasing mTORC1 from lysosomal surface and inhibiting mTORC1 signaling. In the presence of abundant amino acids, the GATOR1 complex is ubiquitinated and inhibited by GATOR2. Within the GATOR1 complex, NPRL2 constitutes the catalytic subunit that mediates the GTPase activator activity and under methionine-sufficient conditions, the GTPase activator activity is inhibited by PRMT1 through methylation and consequently inducing timely mTORC1 activation. In terms of biological role, suppresses Src-dependent tyrosine phosphorylation and activation of PDPK1 and its downstream signaling. Down-regulates PDPK1 kinase activity by interfering with tyrosine phosphorylation at 'Tyr-9', 'Tyr-373' and 'Tyr-376' residues. May act as a tumor suppressor. Suppresses cell growth and enhances sensitivity to various anticancer drugs. This chain is GATOR1 complex protein NPRL2, found in Homo sapiens (Human).